The chain runs to 179 residues: Large ribosomal subunit protein uL5 (179 aa).

This sequence belongs to the universal ribosomal protein uL5 family. In terms of assembly, part of the 50S ribosomal subunit; part of the 5S rRNA/L5/L18/L25 subcomplex. Contacts the 5S rRNA and the P site tRNA. Forms a bridge to the 30S subunit in the 70S ribosome.

In terms of biological role, this is one of the proteins that bind and probably mediate the attachment of the 5S RNA into the large ribosomal subunit, where it forms part of the central protuberance. In the 70S ribosome it contacts protein S13 of the 30S subunit (bridge B1b), connecting the 2 subunits; this bridge is implicated in subunit movement. Contacts the P site tRNA; the 5S rRNA and some of its associated proteins might help stabilize positioning of ribosome-bound tRNAs. This is Large ribosomal subunit protein uL5 from Halothermothrix orenii (strain H 168 / OCM 544 / DSM 9562).